Consider the following 111-residue polypeptide: Cytochrome c (111 aa).

Alanine 1 is modified (N-acetylalanine). Cysteine 22, cysteine 25, and histidine 26 together coordinate heme c. Lysine 80 bears the N6,N6,N6-trimethyllysine mark. Residue methionine 88 coordinates heme c. Lysine 94 bears the N6,N6,N6-trimethyllysine mark.

Belongs to the cytochrome c family. Binds 1 heme c group covalently per subunit.

It is found in the mitochondrion intermembrane space. Its function is as follows. Electron carrier protein. The oxidized form of the cytochrome c heme group can accept an electron from the heme group of the cytochrome c1 subunit of cytochrome reductase. Cytochrome c then transfers this electron to the cytochrome oxidase complex, the final protein carrier in the mitochondrial electron-transport chain. The chain is Cytochrome c from Cannabis sativa (Hemp).